The chain runs to 203 residues: Endo-type membrane-bound lytic murein transglycosylase A (203 aa).

An N-terminal signal peptide occupies residues 1–15 (MKLRWFAFLIVLLAG). A lipid anchor (N-palmitoyl cysteine) is attached at Cys-16. Cys-16 carries S-diacylglycerol cysteine lipidation.

It belongs to the transglycosylase Slt family.

The protein localises to the cell outer membrane. It carries out the reaction Endolytic cleavage of the (1-&gt;4)-beta-glycosidic linkage between N-acetylmuramic acid (MurNAc) and N-acetylglucosamine (GlcNAc) residues in peptidoglycan with concomitant formation of a 1,6-anhydrobond in the MurNAc residue.. Its function is as follows. Murein-degrading enzyme. May play a role in recycling of muropeptides during cell elongation and/or cell division. Preferentially cleaves at a distance of more than two disaccharide units from the ends of the glycan chain. This chain is Endo-type membrane-bound lytic murein transglycosylase A, found in Shigella dysenteriae serotype 1 (strain Sd197).